A 103-amino-acid polypeptide reads, in one-letter code: Pyrimidine/purine nucleoside phosphorylase (103 aa).

This sequence belongs to the nucleoside phosphorylase PpnP family.

The enzyme catalyses a purine D-ribonucleoside + phosphate = a purine nucleobase + alpha-D-ribose 1-phosphate. The catalysed reaction is adenosine + phosphate = alpha-D-ribose 1-phosphate + adenine. It catalyses the reaction cytidine + phosphate = cytosine + alpha-D-ribose 1-phosphate. It carries out the reaction guanosine + phosphate = alpha-D-ribose 1-phosphate + guanine. The enzyme catalyses inosine + phosphate = alpha-D-ribose 1-phosphate + hypoxanthine. The catalysed reaction is thymidine + phosphate = 2-deoxy-alpha-D-ribose 1-phosphate + thymine. It catalyses the reaction uridine + phosphate = alpha-D-ribose 1-phosphate + uracil. It carries out the reaction xanthosine + phosphate = alpha-D-ribose 1-phosphate + xanthine. Functionally, catalyzes the phosphorolysis of diverse nucleosides, yielding D-ribose 1-phosphate and the respective free bases. Can use uridine, adenosine, guanosine, cytidine, thymidine, inosine and xanthosine as substrates. Also catalyzes the reverse reactions. This is Pyrimidine/purine nucleoside phosphorylase from Sulfurovum sp. (strain NBC37-1).